The chain runs to 448 residues: N-succinylarginine dihydrolase (448 aa).

Residues 19–28 (GGLSYGNVAS), Asn-110, and 137–138 (HR) each bind substrate. Residue Glu-174 is part of the active site. Residue Arg-214 coordinates substrate. His-250 is a catalytic residue. Asp-252 and Asn-365 together coordinate substrate. Cys-371 (nucleophile) is an active-site residue.

The protein belongs to the succinylarginine dihydrolase family. In terms of assembly, homodimer.

The enzyme catalyses N(2)-succinyl-L-arginine + 2 H2O + 2 H(+) = N(2)-succinyl-L-ornithine + 2 NH4(+) + CO2. Its pathway is amino-acid degradation; L-arginine degradation via AST pathway; L-glutamate and succinate from L-arginine: step 2/5. Functionally, catalyzes the hydrolysis of N(2)-succinylarginine into N(2)-succinylornithine, ammonia and CO(2). The chain is N-succinylarginine dihydrolase from Pseudomonas fluorescens (strain Pf0-1).